Here is a 640-residue protein sequence, read N- to C-terminus: Threonine--tRNA ligase (640 aa).

The TGS domain maps to 1–61; it reads MPTITLPDGS…ENDASLQIIT (61 aa). Positions 242 to 533 are catalytic; it reads DHRKIGKRLG…LIEHYEGAFP (292 aa). Zn(2+) is bound by residues C333, H384, and H510.

This sequence belongs to the class-II aminoacyl-tRNA synthetase family. Homodimer. The cofactor is Zn(2+).

It localises to the cytoplasm. It catalyses the reaction tRNA(Thr) + L-threonine + ATP = L-threonyl-tRNA(Thr) + AMP + diphosphate + H(+). Catalyzes the attachment of threonine to tRNA(Thr) in a two-step reaction: L-threonine is first activated by ATP to form Thr-AMP and then transferred to the acceptor end of tRNA(Thr). Also edits incorrectly charged L-seryl-tRNA(Thr). This Pseudomonas savastanoi pv. phaseolicola (strain 1448A / Race 6) (Pseudomonas syringae pv. phaseolicola (strain 1448A / Race 6)) protein is Threonine--tRNA ligase.